The sequence spans 312 residues: MFKSGSGSLKRSGSISSVKSFSGDSEKGLPPISRGSVSIASQNSEPLIVPASSSSFAATSDFVPEKTKSEGNLKNKSSVITGNFGSSGPTNAHYNQNANGDRLAENLLLKESSKGRGSSTPDARHTATDSRLSQEVKQPFSEENASGNDLNTGRGSHGTGDGVEQYYKFDCEEGMSAYHKRVVDTFFKYFEYPAEDGHSTLYSDVMFLSGGGDLGLLVMSRYQEVMTLRLRSAIYGIFCYLQALTAYLTYFSAKVGQAVMLDEELEKYEIRLDVAQDDDPIVFQITTGVFTSGVAHDLRKLTQILETFSLER.

Over residues 1 to 23 the composition is skewed to low complexity; that stretch reads MFKSGSGSLKRSGSISSVKSFSG. Disordered regions lie at residues 1–37, 62–97, and 112–159; these read MFKS…RGSV, FVPE…YNQN, and SSKG…SHGT. The span at 63–73 shows a compositional bias: basic and acidic residues; sequence VPEKTKSEGNL. The segment covering 74-97 has biased composition (polar residues); the sequence is KNKSSVITGNFGSSGPTNAHYNQN. A compositionally biased stretch (basic and acidic residues) spans 122 to 134; the sequence is DARHTATDSRLSQ. Positions 135 to 154 are enriched in polar residues; that stretch reads EVKQPFSEENASGNDLNTGR.

It belongs to the phytoreovirus non-structural protein Pns12A family.

Its subcellular location is the host cytoplasm. Functionally, constituent of viral factories. The sequence is that of Non-structural protein 12A from Rice dwarf virus (isolate O) (RDV).